A 271-amino-acid polypeptide reads, in one-letter code: Cell division protein FtsQ (271 aa).

The tract at residues 1 to 37 (MAAGPTTAEKSGASGAKRSSKGSSDGPSRPGTRNRKF) is disordered. Topologically, residues 1 to 43 (MAAGPTTAEKSGASGAKRSSKGSSDGPSRPGTRNRKFRMPGTR) are cytoplasmic. Low complexity predominate over residues 8–24 (AEKSGASGAKRSSKGSS). The chain crosses the membrane as a helical span at residues 44 to 64 (ALLITLGVLLLVAGGLWALYG). At 65 to 271 (STWFRVERVK…APTAPASSGS (207 aa)) the chain is on the extracellular side. Residues 68–137 (FRVERVKTSG…HGIGLKVTER (70 aa)) enclose the POTRA domain.

This sequence belongs to the FtsQ/DivIB family. FtsQ subfamily.

The protein resides in the cell membrane. Essential cell division protein. The protein is Cell division protein FtsQ of Streptomyces venezuelae (strain ATCC 10712 / CBS 650.69 / DSM 40230 / JCM 4526 / NBRC 13096 / PD 04745).